A 338-amino-acid chain; its full sequence is Fructose-1,6-bisphosphatase class 1 (338 aa).

Residues glutamate 94, aspartate 116, leucine 118, and aspartate 119 each coordinate Mg(2+). Substrate contacts are provided by residues 119–122, asparagine 210, and lysine 276; that span reads DGSS. A Mg(2+)-binding site is contributed by glutamate 282.

It belongs to the FBPase class 1 family. Homotetramer. Requires Mg(2+) as cofactor.

The protein localises to the cytoplasm. It carries out the reaction beta-D-fructose 1,6-bisphosphate + H2O = beta-D-fructose 6-phosphate + phosphate. It functions in the pathway carbohydrate biosynthesis; gluconeogenesis. This chain is Fructose-1,6-bisphosphatase class 1, found in Paraburkholderia phytofirmans (strain DSM 17436 / LMG 22146 / PsJN) (Burkholderia phytofirmans).